A 160-amino-acid chain; its full sequence is Cytochrome b6-f complex subunit 4 (160 aa).

3 consecutive transmembrane segments (helical) span residues 36 to 56, 95 to 115, and 131 to 151; these read LLYV…ALAV, LLGV…PFIE, and TVFL…ALPL.

The protein belongs to the cytochrome b family. PetD subfamily. As to quaternary structure, the 4 large subunits of the cytochrome b6-f complex are cytochrome b6, subunit IV (17 kDa polypeptide, PetD), cytochrome f and the Rieske protein, while the 4 small subunits are PetG, PetL, PetM and PetN. The complex functions as a dimer.

The protein resides in the cellular thylakoid membrane. Its function is as follows. Component of the cytochrome b6-f complex, which mediates electron transfer between photosystem II (PSII) and photosystem I (PSI), cyclic electron flow around PSI, and state transitions. The polypeptide is Cytochrome b6-f complex subunit 4 (Nostoc punctiforme (strain ATCC 29133 / PCC 73102)).